The primary structure comprises 106 residues: ATP-dependent Clp protease adapter protein ClpS (106 aa).

Over residues 1–10 the composition is skewed to basic and acidic residues; the sequence is MSQKTVHDQD. Residues 1–22 are disordered; it reads MSQKTVHDQDNALLLETGNTKV.

Belongs to the ClpS family. As to quaternary structure, binds to the N-terminal domain of the chaperone ClpA.

Involved in the modulation of the specificity of the ClpAP-mediated ATP-dependent protein degradation. The protein is ATP-dependent Clp protease adapter protein ClpS of Xylella fastidiosa (strain 9a5c).